A 643-amino-acid chain; its full sequence is 1-deoxy-D-xylulose-5-phosphate synthase (643 aa).

Residues His78 and Ala119–Ser121 contribute to the thiamine diphosphate site. Residue Asp150 coordinates Mg(2+). Residues Gly151–Ser152, Asn179, Tyr288, and Glu370 contribute to the thiamine diphosphate site. Asn179 serves as a coordination point for Mg(2+).

This sequence belongs to the transketolase family. DXPS subfamily. Homodimer. It depends on Mg(2+) as a cofactor. Thiamine diphosphate serves as cofactor.

The enzyme catalyses D-glyceraldehyde 3-phosphate + pyruvate + H(+) = 1-deoxy-D-xylulose 5-phosphate + CO2. It functions in the pathway metabolic intermediate biosynthesis; 1-deoxy-D-xylulose 5-phosphate biosynthesis; 1-deoxy-D-xylulose 5-phosphate from D-glyceraldehyde 3-phosphate and pyruvate: step 1/1. Its function is as follows. Catalyzes the acyloin condensation reaction between C atoms 2 and 3 of pyruvate and glyceraldehyde 3-phosphate to yield 1-deoxy-D-xylulose-5-phosphate (DXP). This Brucella canis (strain ATCC 23365 / NCTC 10854 / RM-666) protein is 1-deoxy-D-xylulose-5-phosphate synthase.